The primary structure comprises 1641 residues: Vitellogenin-1 (1641 aa).

Residues 1 to 18 form the signal peptide; the sequence is MWYLAFLLIIGAYAADHA. The region spanning 19–790 is the Vitellogenin domain; it reads WETGNEYHYL…SQDTTVPKSS (772 aa). Cysteines 172 and 211 form a disulfide. Residues 322 to 334 show a composition bias toward polar residues; the sequence is LRQPSVSLNSMEA. The disordered stretch occupies residues 322–372; that stretch reads LRQPSVSLNSMEARSSENSNEENRSDDDRSNFLSNSGEEREYLQSKPTLNE. Residues 342 to 351 are compositionally biased toward basic and acidic residues; the sequence is EENRSDDDRS. N344, N549, N566, N831, N875, N898, N1001, N1053, N1268, N1393, N1396, N1505, and N1523 each carry an N-linked (GlcNAc...) asparagine glycan. The 188-residue stretch at 1410 to 1597 folds into the VWFD domain; sequence ESVCVLDKTH…TYAMTQESCQ (188 aa). C1435 and C1596 are disulfide-bonded. The disordered stretch occupies residues 1594–1641; the sequence is ESCQGPAPENKRKAEQSTCMSRSYRPSDVISDREAGRSSTKNRGWGYH.

Hemolymph.

It localises to the secreted. Precursor of the egg-yolk proteins that are sources of nutrients during embryonic development. The polypeptide is Vitellogenin-1 (Solenopsis invicta (Red imported fire ant)).